Here is a 448-residue protein sequence, read N- to C-terminus: Tapasin (448 aa).

The first 20 residues, 1-20 (MKSLSLLLAVALGLATAVSA), serve as a signal peptide directing secretion. The Lumenal segment spans residues 21 to 414 (GPAVIECWFV…LSGPSLEDSI (394 aa)). Cysteine 27 and cysteine 91 are disulfide-bonded. N-linked (GlcNAc...) asparagine glycosylation occurs at asparagine 253. The 108-residue stretch at 292–399 (PKVSLMPATL…PASGRSAEVT (108 aa)) folds into the Ig-like C1-type domain. An intrachain disulfide couples cysteine 315 to cysteine 382. The chain crosses the membrane as a helical span at residues 415–435 (GLFLSAFFLLGLFKALGWAAV). Residues 436-448 (YLSTCKDSKKKAE) are Cytoplasmic-facing.

In terms of assembly, heterodimer with PDIA3; disulfide-linked. Obligatory mediator for the interaction between newly assembled MHC class I molecules, calreticulin, PDIA3 and TAP. Up to 4 MHC class I/tapasin complexes bind to 1 TAP. Interacts with HLA-G-B2M complex; this interaction is required for loading of high affinity peptides. On its own or as part of MHC class I peptide loading complex, interacts with ligand-free MR1 or MR1-B2M complex, providing for stable MR1 pools ready for metabolite antigen processing.

It localises to the endoplasmic reticulum membrane. Its function is as follows. Involved in the association of MHC class I with transporter associated with antigen processing (TAP) and in the assembly of MHC class I with peptide (peptide loading). The protein is Tapasin (TAPBP) of Chlorocebus aethiops (Green monkey).